The chain runs to 343 residues: MTIDDRKIKILQAIINDYIHTGDPVGSRTIAKKYNLGVGSATIRNEMADLEDMGYLEQPHASSGRVPSNKGYRLYVDSLMENQLLTPEENLKIKQYIIDTAMLEVDKIVRQTSSLLSELTNLTCVIQTPSVNKSFIKSLQLMKVDSTTLVSVIITDAGVMKNHIIRVNSTPTIEELNKINAVINRRLVNLCIEQINLQVINQLKEDLQGYDELFNALLTPLYETLKNAADSPDLIMEGATNIFNYPEYNDIEKAKEMLSLLNDKESLRDLLKTNKDITIRIGEENYKPQAKDCSIIAAEYSFGDRPIGTIGLIGPKRIDYSKVISIMAEIVKELNNILNNQSK.

It belongs to the HrcA family.

Negative regulator of class I heat shock genes (grpE-dnaK-dnaJ and groELS operons). Prevents heat-shock induction of these operons. In Clostridium botulinum (strain Alaska E43 / Type E3), this protein is Heat-inducible transcription repressor HrcA.